Here is a 1079-residue protein sequence, read N- to C-terminus: MFYKTFGFLFIYLIILISGTLSQKEIDSSNEQPVIEVFLVPHSHCDVGWLKTVEQYYTENVTLILNNVIETLTKDKSKKFNWAEIIYFERWWNDQNETLQNQVKQLISNKQFYFVGGGWTQNDEAITDYQAVINQMTLGHQFLFNQFGIKPEIGWQIDPFGPSTLTPTLFKLMGFKYHVINRIDERIKYIFNATEMNIPESGIMTIEREFEFLWYPSSNNPNISIFTHVLDHHYESPSLTIVDYEIPNLTYTSGFDFEGNPKINPPITILNLRFRADLLVKIIKERIDLFRHNNLLLPFGGDFRFQDSKIEFNNMDKLIKFINSNQKTYGVNIKYSTVDEYFEKVIQDTNINWKEDTTTTTTTTIPIGGDEFPKLSNLDYFDYTKCDYNDYQKYKTCSLYYSGFFSSYSELKQISRQSDSLLRIGEFLYSFANLISNNNNNDDDDDDDNDFNIQLKEISNILVQHRNVSGILTHHDAITGTAKTKVRDDYLLMLNQVQSNTMNNVIPNIVGYLLSNKSIQNFDYSCNNTIIMNSPQIGDIFSISFTNSLGWDRSEYIQIQLPPSTIVTVYNYNLISIQSQIVQRFDKDNQTFLYFNVETPSLGISTYFIIITSTNDDNVDDDVDKVFGDDELLIYLLKNGILSKPILSEISEISELSSSSSSSSSSSSSQITIGNSKFNLNFNYLNENYNLLTLTSFDDLIENEYSIPITQNYIEYISGNDNSYIFKPSGLPVNLKPESPKFYKVTGSLVQMITILYTNNCSQTYIVYNSTTTTTTTTTTTTTTNNDDSPPLELINDEQYFEIDNIVAAGWNKEIGSQFSSESINNDKTFYTSNGLELIERNYKSLFNDTTEFNMIAGNYYPVINTIQILDNKSKKQLTILTKQSFGASSQNNGELNLLFIRRSTDQFVTLNETMNDISNPLIKIKVLFGNSNSIENIRTPHSLLLENPLLPIYSIVSDITIDKWISIYNTVFKPFKTSLPYNLHLLTFTKQQQQQQQDFNEDNPLDYFIRFLNIYEISQSESFSQPIEFKLTNYFNNFNITNIRESSLTFNSIINNNTNSIILNPLNLISLIITISKN.

Residues 1-22 form the signal peptide; that stretch reads MFYKTFGFLFIYLIILISGTLS. Positions 44 and 46 each coordinate Zn(2+). Asn60 and Asn96 each carry an N-linked (GlcNAc...) asparagine glycan. Zn(2+) is bound at residue Asp158. The active-site Nucleophile is the Asp158. N-linked (GlcNAc...) asparagine glycans are attached at residues Asn192, Asn222, Asn248, and Asn467. A Zn(2+)-binding site is contributed by His475. Asn516, Asn527, Asn589, Asn760, Asn769, Asn848, Asn872, Asn912, Asn1040, and Asn1057 each carry an N-linked (GlcNAc...) asparagine glycan.

It belongs to the glycosyl hydrolase 38 family. Zn(2+) is required as a cofactor.

The protein localises to the secreted. It carries out the reaction Hydrolysis of terminal, non-reducing alpha-D-mannose residues in alpha-D-mannosides.. This is Alpha-mannosidase C (manC) from Dictyostelium discoideum (Social amoeba).